A 544-amino-acid polypeptide reads, in one-letter code: Chaperonin GroEL 2 (544 aa).

ATP contacts are provided by residues 29-32 (TLGP), 86-90 (DGTTT), Gly-413, 479-481 (NAA), and Asp-495.

This sequence belongs to the chaperonin (HSP60) family. In terms of assembly, forms a cylinder of 14 subunits composed of two heptameric rings stacked back-to-back. Interacts with the co-chaperonin GroES.

The protein localises to the cytoplasm. It catalyses the reaction ATP + H2O + a folded polypeptide = ADP + phosphate + an unfolded polypeptide.. Its function is as follows. Together with its co-chaperonin GroES, plays an essential role in assisting protein folding. The GroEL-GroES system forms a nano-cage that allows encapsulation of the non-native substrate proteins and provides a physical environment optimized to promote and accelerate protein folding. The chain is Chaperonin GroEL 2 from Prochlorococcus marinus (strain MIT 9313).